The following is an 897-amino-acid chain: Protein SAP1 (897 aa).

5 disordered regions span residues 112–144 (EEPAPRNDMPSSKTYTNHSSSFTRSTEPPPVFQ), 195–219 (PSKPLSNNASRQHKNPIEHNDPPLK), 302–398 (QMSD…TKST), 413–438 (SKSNTKPIIKSNASSPTSSLTVPNSV), and 456–561 (KKVA…REEP). The span at 120-137 (MPSSKTYTNHSSSFTRST) shows a compositional bias: polar residues. Residues 209 to 219 (NPIEHNDPPLK) show a composition bias toward basic and acidic residues. Over residues 307 to 321 (SVTSSTSSNKSVSSS) the composition is skewed to low complexity. The span at 364–380 (LETSTTMDSSKIRNPQI) shows a compositional bias: polar residues. Residues 468-478 (KKSHPILKSKT) are compositionally biased toward basic residues. A compositionally biased stretch (low complexity) spans 480–496 (KVPNSSSKKTSSHPSRP). Residues 497-523 (VSNSKPYSHGASQNKKPSKNQTTSMSK) are compositionally biased toward polar residues. Serine 536 is subject to Phosphoserine. 645-652 (GPPGTGKT) provides a ligand contact to ATP.

Belongs to the AAA ATPase family. As to quaternary structure, interacts with SPT2/SIN1.

The sequence is that of Protein SAP1 (SAP1) from Saccharomyces cerevisiae (strain ATCC 204508 / S288c) (Baker's yeast).